The sequence spans 438 residues: Probable tRNA pseudouridine synthase D (438 aa).

The active-site Nucleophile is aspartate 86. The TRUD domain occupies 165 to 390; that stretch reads GVPNFFGIQR…SKGTRREVLL (226 aa).

This sequence belongs to the pseudouridine synthase TruD family.

It carries out the reaction uridine(13) in tRNA = pseudouridine(13) in tRNA. Could be responsible for synthesis of pseudouridine from uracil-13 in transfer RNAs. The polypeptide is Probable tRNA pseudouridine synthase D (Methanosarcina mazei (strain ATCC BAA-159 / DSM 3647 / Goe1 / Go1 / JCM 11833 / OCM 88) (Methanosarcina frisia)).